We begin with the raw amino-acid sequence, 275 residues long: MSVAEYARDCAAQGLRGDYSVCRADFTVAQDYDYSDEEQAVWRTLCDRQTKLTRKLAHHSYLDGVEKLGLLDRIPDFEDVSTKLRKLTGWEIIAVPGLIPAAPFFDHLANRRFPVTNWLRTRQELDYIVEPDMFHDFFGHVPVLSQPVFADFMQMYGKKAGDIIALGGDEMITRLYWYTAEYGLVQEAGQPLKAFGAGLMSSFTELQFAVEGKDAHHVPFDLETVMRTGYEIDKFQRAYFVLPSFDALRDAFQTADFEAIVARRKDQKALDPATV.

The Fe cation site is built by histidine 135, histidine 140, and glutamate 181.

The protein belongs to the biopterin-dependent aromatic amino acid hydroxylase family. Fe(2+) is required as a cofactor.

The enzyme catalyses (6R)-L-erythro-5,6,7,8-tetrahydrobiopterin + L-phenylalanine + O2 = (4aS,6R)-4a-hydroxy-L-erythro-5,6,7,8-tetrahydrobiopterin + L-tyrosine. Its pathway is amino-acid degradation; L-phenylalanine degradation; acetoacetate and fumarate from L-phenylalanine: step 1/6. In Mesorhizobium japonicum (strain LMG 29417 / CECT 9101 / MAFF 303099) (Mesorhizobium loti (strain MAFF 303099)), this protein is Phenylalanine-4-hydroxylase (phhA).